An 88-amino-acid chain; its full sequence is Small ribosomal subunit protein uS17 (88 aa).

It belongs to the universal ribosomal protein uS17 family. In terms of assembly, part of the 30S ribosomal subunit.

Its function is as follows. One of the primary rRNA binding proteins, it binds specifically to the 5'-end of 16S ribosomal RNA. The sequence is that of Small ribosomal subunit protein uS17 from Ligilactobacillus salivarius (strain UCC118) (Lactobacillus salivarius).